Here is a 282-residue protein sequence, read N- to C-terminus: High mobility group nucleosome-binding domain-containing protein 5 (282 aa).

Residues M1–V282 form a disordered region. Position 31 is a phosphothreonine (T31). Basic residues predominate over residues K37–K46. Residue K67 forms a Glycyl lysine isopeptide (Lys-Gly) (interchain with G-Cter in SUMO2) linkage. Y76 is modified (phosphotyrosine). The segment covering K81–V119 has biased composition (basic and acidic residues). S93 bears the Phosphoserine mark. A Glycyl lysine isopeptide (Lys-Gly) (interchain with G-Cter in SUMO1); alternate cross-link involves residue K101. A Glycyl lysine isopeptide (Lys-Gly) (interchain with G-Cter in SUMO2); alternate cross-link involves residue K101. K124 participates in a covalent cross-link: Glycyl lysine isopeptide (Lys-Gly) (interchain with G-Cter in SUMO2). Residues N125–N138 are compositionally biased toward acidic residues. Basic and acidic residues-rich tracts occupy residues E139–K152 and K158–L256. Over residues K257–E270 the composition is skewed to acidic residues. Positions D271–V282 are enriched in basic and acidic residues.

The protein belongs to the HMGN family. In terms of tissue distribution, ubiquitously expressed.

It localises to the nucleus. In terms of biological role, preferentially binds to euchromatin and modulates cellular transcription by counteracting linker histone-mediated chromatin compaction. The chain is High mobility group nucleosome-binding domain-containing protein 5 (HMGN5) from Homo sapiens (Human).